The following is a 560-amino-acid chain: Putative transport protein VSAL_I2029 (560 aa).

Transmembrane regions (helical) follow at residues 14–34 (ILLL…KIGS), 37–57 (LGSS…GYTF), 66–86 (FMLF…GIFL), 94–114 (LLVL…GYYF), and 161–181 (NLSV…ILLA). RCK C-terminal domains follow at residues 203-292 (RGIG…FRNG) and 293-376 (KEVF…KIGF). 5 consecutive transmembrane segments (helical) span residues 386–406 (LLAF…TMSF), 409–429 (VTFG…LGFL), 451–471 (GLLV…IEYF), 478–498 (VLAA…LVGA), and 539–559 (AGTY…MILL).

The protein belongs to the AAE transporter (TC 2.A.81) family. YbjL subfamily.

Its subcellular location is the cell membrane. The chain is Putative transport protein VSAL_I2029 from Aliivibrio salmonicida (strain LFI1238) (Vibrio salmonicida (strain LFI1238)).